The primary structure comprises 323 residues: Protein translocase subunit SecF (323 aa).

Residues 1-22 (MAQEYTVEQLNHGRKVYDFMRW) lie on the Cytoplasmic side of the membrane. A helical transmembrane segment spans residues 23–43 (DYWAFGISGLLLIAAIVIMGV). Topologically, residues 44–142 (RGFNWGLDFT…FVGPSVGADL (99 aa)) are periplasmic. The chain crosses the membrane as a helical span at residues 143–163 (AQTGAMALMAALLSILVYVGF). Residues 164 to 170 (RFEWRLA) are Cytoplasmic-facing. A helical transmembrane segment spans residues 171-191 (AGVVIALAHDVIITLGILSLF). The Periplasmic portion of the chain corresponds to 192 to 196 (HIEID). Residues 197–217 (LTIVASLMSVIGYSLNDSIVV) traverse the membrane as a helical segment. Residues 218–247 (SDRIRENFRKIRRGTPYEIFNVSLTQTLHR) are Cytoplasmic-facing. A helical transmembrane segment spans residues 248–270 (TLITSGTTLMVILMLYLFGGPVL). Over 271 to 280 (EGFSLTMLIG) the chain is Periplasmic. Residues 281-301 (VSIGTASSIYVASALALKLGM) form a helical membrane-spanning segment. The Cytoplasmic segment spans residues 302 to 323 (KREHMLQQKVEKEGADQPSILP).

Belongs to the SecD/SecF family. SecF subfamily. Forms a complex with SecD. Part of the essential Sec protein translocation apparatus which comprises SecA, SecYEG and auxiliary proteins SecDF-YajC and YidC.

It localises to the cell inner membrane. Functionally, part of the Sec protein translocase complex. Interacts with the SecYEG preprotein conducting channel. SecDF uses the proton motive force (PMF) to complete protein translocation after the ATP-dependent function of SecA. The protein is Protein translocase subunit SecF of Escherichia coli O157:H7.